We begin with the raw amino-acid sequence, 337 residues long: Glutathione transferase 3 (337 aa).

Residues 1–239 (MPTKSTFSRW…NKYQYTLDFC (239 aa)) are Cytoplasmic-facing. Phosphoserine occurs at positions 66, 72, 99, and 116. The tract at residues 66–95 (SMTVDQSKDERNEYGSGSGNGSGSGSCDTA) is disordered. The segment at 107–132 (KEDDDEKPQSGDETSATKPLSSRNAN) is disordered. The span at 117 to 132 (GDETSATKPLSSRNAN) shows a compositional bias: polar residues. The helical transmembrane segment at 240–260 (LPILTWLLFFRGIPTLVSYYI) threads the bilayer. Residues 261 to 313 (NFIRYDLNIELDPMTFNLTKFLISLAIFKTCNNKNIDFHSFRCVNQLWTQLCT) are Perinuclear space-facing. Residues 314–336 (VNRSLGMVPLVFSMVSCLLTLYV) traverse the membrane as a helical segment. Residue Leu-337 is a topological domain, cytoplasmic.

Its subcellular location is the nucleus membrane. In Saccharomyces cerevisiae (strain ATCC 204508 / S288c) (Baker's yeast), this protein is Glutathione transferase 3 (GTT3).